Here is a 125-residue protein sequence, read N- to C-terminus: Large ribosomal subunit protein bL12 (125 aa).

Belongs to the bacterial ribosomal protein bL12 family. Homodimer. Part of the ribosomal stalk of the 50S ribosomal subunit. Forms a multimeric L10(L12)X complex, where L10 forms an elongated spine to which 2 to 4 L12 dimers bind in a sequential fashion. Binds GTP-bound translation factors.

Its function is as follows. Forms part of the ribosomal stalk which helps the ribosome interact with GTP-bound translation factors. Is thus essential for accurate translation. This Polaromonas sp. (strain JS666 / ATCC BAA-500) protein is Large ribosomal subunit protein bL12.